A 206-amino-acid chain; its full sequence is Phosphoribosyl-dephospho-CoA transferase (206 aa).

Catalysis depends on residues Asp131 and Asp133.

It belongs to the MdcG family.

It carries out the reaction apo-[malonate decarboxylase ACP] + 2'-(5''-triphospho-alpha-D-ribosyl)-3'-dephospho-CoA = holo-[malonate decarboxylase ACP] + diphosphate. Its function is as follows. Transfers 2'-(5-triphosphoribosyl)-3'-dephosphocoenzyme-A to the apo-[acyl-carrier-protein] of the malonate decarboxylase to yield holo-[acyl-carrier-protein]. This is Phosphoribosyl-dephospho-CoA transferase from Pseudomonas fluorescens (strain Pf0-1).